The primary structure comprises 345 residues: Nuclear distribution protein nudE-like 1 (345 aa).

Positions 28–190 (QSFQEARDEL…LAVRERQQEV (163 aa)) form a coiled coil. Residues 56-166 (VQAEQRNRDL…LDEKESLLVS (111 aa)) form a self-association region. The tract at residues 64–189 (DLQADNQRLK…ELAVRERQQE (126 aa)) is interaction with KATNB1. The required for interaction with PAFAH1B1 stretch occupies residues 114–133 (YVRELEQANDDLERAKRATI). The interval 175 to 345 (RDLRQELAVR…SAPGMLPLSV (171 aa)) is interaction with CENPF. Positions 189-256 (EVTRKSAPSS…SARISALNIV (68 aa)) are interaction with YWHAE. Residues 191–345 (TRKSAPSSPT…SAPGMLPLSV (155 aa)) are interaction with NEFL. The interval 195–256 (APSSPTLDCE…SARISALNIV (62 aa)) is interaction with KATNA1. Ser215 carries the phosphoserine modification. Thr219 carries the post-translational modification Phosphothreonine; by CDK1 and MAPK1. Position 231 is a phosphoserine (Ser231). An interaction with DISC1 region spans residues 241–280 (TSPLTPSARISALNIVGDLLRKVGALESKLAACRNFAKDQ). Ser242 carries the post-translational modification Phosphoserine; by CDK1. Phosphothreonine; by CDK1 and MAPK1 is present on Thr245. The interval 256–291 (VGDLLRKVGALESKLAACRNFAKDQASRKSYISGNV) is required for localization to the centrosome and interaction with dynein, dynactin, tubulin gamma, PCM1 and PCNT. Cys273 is lipidated: S-palmitoyl cysteine; by ZDHHC2, ZDHHC3 and ZDHHC7. Positions 315 to 345 (GAVNGFDPAPPPPGLGSSRPSSAPGMLPLSV) are disordered. Residues 329–339 (LGSSRPSSAPG) are compositionally biased toward low complexity. Ser344 is subject to Phosphoserine.

This sequence belongs to the nudE family. As to quaternary structure, interacts with PLEKHM1 (via N- and C-terminus). Interacts with YWHAE. Interacts directly with NEFL and indirectly with NEFH. Interacts with microtubules. Self-associates. Interacts with DISC1, dynein, dynactin, tubulin gamma, KATNA1, KATNB1, PAFAH1B1, PCM1 and PCNT. Interacts (via C-terminus) with CENPF. Interacts with ZNF365. Interacts with GTP-bound RAB9A; the interaction may lead to RAB9A-dynein motor tethering. Post-translationally, phosphorylated in mitosis. Can be phosphorylated by CDK1, CDK5 and MAPK1. Phosphorylation by CDK5 promotes interaction with KATNA1 and YWHAE. In terms of processing, palmitoylation at Cys-273 reduces affinity for dynein. As to expression, expressed in brain, heart, kidney, liver, lung, pancreas, placenta and skeletal muscle.

The protein localises to the cytoplasm. It localises to the cytoskeleton. It is found in the microtubule organizing center. The protein resides in the centrosome. Its subcellular location is the chromosome. The protein localises to the centromere. It localises to the kinetochore. It is found in the spindle. Required for organization of the cellular microtubule array and microtubule anchoring at the centrosome. May regulate microtubule organization at least in part by targeting the microtubule severing protein KATNA1 to the centrosome. Also positively regulates the activity of the minus-end directed microtubule motor protein dynein. May enhance dynein-mediated microtubule sliding by targeting dynein to the microtubule plus ends. Required for several dynein- and microtubule-dependent processes such as the maintenance of Golgi integrity, the centripetal motion of secretory vesicles and the coupling of the nucleus and centrosome. Also required during brain development for the migration of newly formed neurons from the ventricular/subventricular zone toward the cortical plate. Plays a role, together with DISC1, in the regulation of neurite outgrowth. Required for mitosis in some cell types but appears to be dispensible for mitosis in cortical neuronal progenitors, which instead requires NDE1. Facilitates the polymerization of neurofilaments from the individual subunits NEFH and NEFL. Positively regulates lysosome peripheral distribution and ruffled border formation in osteoclasts. Plays a role, together with DISC1, in the regulation of neurite outgrowth. May act as a RAB9A/B effector that tethers RAB9-associated late endosomes to the dynein motor for their retrograde transport to the trans-Golgi network. This chain is Nuclear distribution protein nudE-like 1 (NDEL1), found in Homo sapiens (Human).